A 77-amino-acid polypeptide reads, in one-letter code: U8-lycotoxin-Ls1s (77 aa).

Residues 1-20 form the signal peptide; it reads MKLIIFTGLVLFAIVSLIEA. The propeptide occupies 21–26; that stretch reads QAENER.

Belongs to the neurotoxin 19 (CSTX) family. 08 (U8-Lctx) subfamily. In terms of processing, contains 4 disulfide bonds. Expressed by the venom gland.

It is found in the secreted. The polypeptide is U8-lycotoxin-Ls1s (Lycosa singoriensis (Wolf spider)).